Reading from the N-terminus, the 390-residue chain is Delta-aminolevulinic acid dehydratase, chloroplastic (390 aa).

The transit peptide at 1-24 (MQMMQRNVVGQRPVAGSRRSLVVA) directs the protein to the chloroplast. The disordered stretch occupies residues 34-69 (VSTNGKHRTGVPEGTPIVTPQDLPSRPRRNRRSESF). K251 serves as the catalytic Schiff-base intermediate with substrate. 2 residues coordinate 5-aminolevulinate: R261 and K281. E297 serves as a coordination point for Mg(2+). The Schiff-base intermediate with substrate role is filled by K312. 5-aminolevulinate-binding residues include S338 and Y377.

This sequence belongs to the ALAD family. In terms of assembly, homooctamer. The cofactor is Mg(2+).

Its subcellular location is the plastid. It localises to the chloroplast. It carries out the reaction 2 5-aminolevulinate = porphobilinogen + 2 H2O + H(+). Its pathway is porphyrin-containing compound metabolism; protoporphyrin-IX biosynthesis; coproporphyrinogen-III from 5-aminolevulinate: step 1/4. In terms of biological role, catalyzes an early step in the biosynthesis of tetrapyrroles. Binds two molecules of 5-aminolevulinate per subunit, each at a distinct site, and catalyzes their condensation to form porphobilinogen. The polypeptide is Delta-aminolevulinic acid dehydratase, chloroplastic (HEMB) (Chlamydomonas reinhardtii (Chlamydomonas smithii)).